Consider the following 40-residue polypeptide: Photosystem II reaction center protein J (40 aa).

Residues 8-28 traverse the membrane as a helical segment; the sequence is IPLWIIGTVAGILVIGLIGIF.

It belongs to the PsbJ family. As to quaternary structure, PSII is composed of 1 copy each of membrane proteins PsbA, PsbB, PsbC, PsbD, PsbE, PsbF, PsbH, PsbI, PsbJ, PsbK, PsbL, PsbM, PsbT, PsbX, PsbY, PsbZ, Psb30/Ycf12, at least 3 peripheral proteins of the oxygen-evolving complex and a large number of cofactors. It forms dimeric complexes.

The protein localises to the plastid. Its subcellular location is the chloroplast thylakoid membrane. In terms of biological role, one of the components of the core complex of photosystem II (PSII). PSII is a light-driven water:plastoquinone oxidoreductase that uses light energy to abstract electrons from H(2)O, generating O(2) and a proton gradient subsequently used for ATP formation. It consists of a core antenna complex that captures photons, and an electron transfer chain that converts photonic excitation into a charge separation. This is Photosystem II reaction center protein J from Oenothera elata subsp. hookeri (Hooker's evening primrose).